The sequence spans 323 residues: Aspartate carbamoyltransferase catalytic subunit (323 aa).

Carbamoyl phosphate contacts are provided by Arg-71 and Thr-72. Lys-99 is an L-aspartate binding site. Residues Arg-121, His-151, and Gln-154 each coordinate carbamoyl phosphate. L-aspartate-binding residues include Arg-184 and Arg-239. 2 residues coordinate carbamoyl phosphate: Gly-280 and Pro-281.

Belongs to the aspartate/ornithine carbamoyltransferase superfamily. ATCase family. Heterododecamer (2C3:3R2) of six catalytic PyrB chains organized as two trimers (C3), and six regulatory PyrI chains organized as three dimers (R2).

It carries out the reaction carbamoyl phosphate + L-aspartate = N-carbamoyl-L-aspartate + phosphate + H(+). It functions in the pathway pyrimidine metabolism; UMP biosynthesis via de novo pathway; (S)-dihydroorotate from bicarbonate: step 2/3. Functionally, catalyzes the condensation of carbamoyl phosphate and aspartate to form carbamoyl aspartate and inorganic phosphate, the committed step in the de novo pyrimidine nucleotide biosynthesis pathway. This is Aspartate carbamoyltransferase catalytic subunit from Ralstonia pickettii (strain 12J).